The following is a 45-amino-acid chain: Rubredoxin-1 (45 aa).

At Met-1 the chain carries N-formylmethionine. The 45-residue stretch at Met-1 to Ala-45 folds into the Rubredoxin-like domain. Positions 6, 9, 32, and 35 each coordinate Fe cation.

The protein belongs to the rubredoxin family. The cofactor is Fe(3+).

Its subcellular location is the cytoplasm. In terms of biological role, rubredoxin is a small nonheme, iron protein lacking acid-labile sulfide. Its single Fe, chelated to 4 Cys, functions as an electron acceptor and may also stabilize the conformation of the molecule. Electron acceptor for cytoplasmic lactate dehydrogenase. The chain is Rubredoxin-1 (rd1) from Desulfovibrio desulfuricans (strain ATCC 27774 / DSM 6949 / MB).